The chain runs to 205 residues: Riboflavin kinase (205 aa).

The interval methionine 1–arginine 24 is disordered. Mg(2+) is bound by residues threonine 44 and asparagine 46. The active-site Nucleophile is the glutamate 104.

Belongs to the flavokinase family. Zn(2+) is required as a cofactor. It depends on Mg(2+) as a cofactor.

The catalysed reaction is riboflavin + ATP = FMN + ADP + H(+). Its pathway is cofactor biosynthesis; FMN biosynthesis; FMN from riboflavin (ATP route): step 1/1. In terms of biological role, catalyzes the phosphorylation of riboflavin (vitamin B2) to form flavin mononucleotide (FMN) coenzyme. The polypeptide is Riboflavin kinase (fmn1) (Aspergillus terreus (strain NIH 2624 / FGSC A1156)).